Here is a 72-residue protein sequence, read N- to C-terminus: Candidate secreted effector protein MPL124499 (72 aa).

Residues 1–21 (MKLSIFAAIFMAFVSLNQVFG) form the signal peptide.

It belongs to the CPGH1 family.

The protein localises to the secreted. Its subcellular location is the host cell. It is found in the host cytoplasm. The protein resides in the host nucleus. In terms of biological role, rust effector delivered into infected tissues to modulate host functions and contribute to pathogen virulence. Enhances leaf colonization by the bacteria Pseudomonas syringae and the oomycete Hyaloperonospora arabidopsidis pathogens in an Arabidopsis thaliana infection model. In Melampsora larici-populina (strain 98AG31 / pathotype 3-4-7) (Poplar leaf rust fungus), this protein is Candidate secreted effector protein MPL124499.